Consider the following 185-residue polypeptide: Ribosome-recycling factor (185 aa).

Belongs to the RRF family.

Its subcellular location is the cytoplasm. Functionally, responsible for the release of ribosomes from messenger RNA at the termination of protein biosynthesis. May increase the efficiency of translation by recycling ribosomes from one round of translation to another. The protein is Ribosome-recycling factor of Neisseria meningitidis serogroup A / serotype 4A (strain DSM 15465 / Z2491).